The following is a 1164-amino-acid chain: DNA-directed RNA polymerase subunit beta (1164 aa).

The protein belongs to the RNA polymerase beta chain family. The RNAP catalytic core consists of 2 alpha, 1 beta, 1 beta' and 1 omega subunit. When a sigma factor is associated with the core the holoenzyme is formed, which can initiate transcription.

It carries out the reaction RNA(n) + a ribonucleoside 5'-triphosphate = RNA(n+1) + diphosphate. In terms of biological role, DNA-dependent RNA polymerase catalyzes the transcription of DNA into RNA using the four ribonucleoside triphosphates as substrates. The polypeptide is DNA-directed RNA polymerase subunit beta (Saccharopolyspora erythraea (strain ATCC 11635 / DSM 40517 / JCM 4748 / NBRC 13426 / NCIMB 8594 / NRRL 2338)).